A 107-amino-acid chain; its full sequence is Small ribosomal subunit protein uS17 (107 aa).

Belongs to the universal ribosomal protein uS17 family. In terms of assembly, part of the 30S ribosomal subunit.

In terms of biological role, one of the primary rRNA binding proteins, it binds specifically to the 5'-end of 16S ribosomal RNA. The protein is Small ribosomal subunit protein uS17 of Thermotoga sp. (strain RQ2).